The following is a 209-amino-acid chain: Protein ASG7 (209 aa).

Over 1-49 the chain is Lumenal; that stretch reads MTTLASSIEHKTKHLAAPFENDENTWMKKYCCQCKSCKMSVPVQPWLPR. The helical transmembrane segment at 50–70 threads the bilayer; that stretch reads FFVFGILCPVFWLVNLLAWWF. Residues 71–184 lie on the Cytoplasmic side of the membrane; it reads LQYWQPHELE…LLRKTFRNWN (114 aa). 3 positions are modified to phosphoserine: serine 121, serine 123, and serine 125. Threonine 153 is modified (phosphothreonine). Residues 185–205 form a helical membrane-spanning segment; sequence LRSLLGLLIDSILIIFVVLLC. Residues 206 to 209 lie on the Lumenal side of the membrane; the sequence is KKSR.

The protein resides in the endomembrane system. Required for receptor inhibition of inappropriately expressed a-factor receptor (STE3) in MAT a cells. Inhibits signaling by relocalizing the G protein beta-gamma (STE4-STE18) subunit to intracellular membranes. May also be a mechanism for the down-regulation of the mating pheromone response after the zygotic fusion event, promoting the transition of the new diploid cell to vegetative growth. This Saccharomyces cerevisiae (strain YJM789) (Baker's yeast) protein is Protein ASG7 (ASG7).